We begin with the raw amino-acid sequence, 244 residues long: MSLEERMRKAERTLLAVLLDPAKLDDEGARKLARAASEGGADLIFVGGSIGAGFRINEIILSVKKESNIPIILFPGNVDGVSPYADAILFMSLLNSTNPYWIIQAQALAAIPIRRMGLEAIPTAYLIVEPGQRSAAGWVGSVNPIPRDKPEIALAYATAAEMLGMRWIYLEAGSGAEAPVPSEMVRLVRERTNLGIIVGGGLRSPELVRERAEAGANVIVVGTHIEEGRDALASVREMKEALKS.

Asp20 and Ser49 together coordinate Mg(2+). Sn-glycerol 1-phosphate is bound by residues 169–175 (YLEAGSG), 200–201 (GG), and 222–223 (GT).

It belongs to the GGGP/HepGP synthase family. Group II subfamily. Mg(2+) serves as cofactor.

It localises to the cytoplasm. It carries out the reaction sn-glycerol 1-phosphate + (2E,6E,10E)-geranylgeranyl diphosphate = sn-3-O-(geranylgeranyl)glycerol 1-phosphate + diphosphate. Its pathway is membrane lipid metabolism; glycerophospholipid metabolism. Its function is as follows. Prenyltransferase that catalyzes the transfer of the geranylgeranyl moiety of geranylgeranyl diphosphate (GGPP) to the C3 hydroxyl of sn-glycerol-1-phosphate (G1P). This reaction is the first ether-bond-formation step in the biosynthesis of archaeal membrane lipids. In Korarchaeum cryptofilum (strain OPF8), this protein is Geranylgeranylglyceryl phosphate synthase.